A 101-amino-acid polypeptide reads, in one-letter code: NAD(P)H-quinone oxidoreductase subunit 4L, chloroplastic (101 aa).

3 helical membrane-spanning segments follow: residues 2 to 22, 32 to 52, and 61 to 81; these read MTEY…YGLI, MCLE…SDLF, and IFSI…PAIV.

Belongs to the complex I subunit 4L family. NDH is composed of at least 16 different subunits, 5 of which are encoded in the nucleus.

It is found in the plastid. Its subcellular location is the chloroplast thylakoid membrane. The catalysed reaction is a plastoquinone + NADH + (n+1) H(+)(in) = a plastoquinol + NAD(+) + n H(+)(out). It catalyses the reaction a plastoquinone + NADPH + (n+1) H(+)(in) = a plastoquinol + NADP(+) + n H(+)(out). NDH shuttles electrons from NAD(P)H:plastoquinone, via FMN and iron-sulfur (Fe-S) centers, to quinones in the photosynthetic chain and possibly in a chloroplast respiratory chain. The immediate electron acceptor for the enzyme in this species is believed to be plastoquinone. Couples the redox reaction to proton translocation, and thus conserves the redox energy in a proton gradient. This is NAD(P)H-quinone oxidoreductase subunit 4L, chloroplastic from Calycanthus floridus var. glaucus (Eastern sweetshrub).